The primary structure comprises 93 residues: Alpha-defensin 3 (93 aa).

Residues 1–16 form the signal peptide; that stretch reads MKTLVLLSALVLLAFQ. Positions 17-58 are excised as a propeptide; the sequence is VQADPIQNTDEETKTEEQPGEDDQAVSVSFGDPEGSSLQEES. The segment at 22-56 is disordered; the sequence is IQNTDEETKTEEQPGEDDQAVSVSFGDPEGSSLQE. Intrachain disulfides connect C64–C92, C66–C81, and C71–C91.

Belongs to the alpha-defensin family. In terms of tissue distribution, paneth cells of the small bowel.

The protein resides in the secreted. Functionally, probably contributes to the antimicrobial barrier function of the small bowel mucosa. The chain is Alpha-defensin 3 (Defa3) from Mus musculus (Mouse).